We begin with the raw amino-acid sequence, 189 residues long: Cell division protein SepF (189 aa).

The disordered stretch occupies residues glutamate 18–aspartate 64. Basic and acidic residues predominate over residues histidine 22–lysine 35.

This sequence belongs to the SepF family. Homodimer. Interacts with FtsZ.

It is found in the cytoplasm. In terms of biological role, cell division protein that is part of the divisome complex and is recruited early to the Z-ring. Probably stimulates Z-ring formation, perhaps through the cross-linking of FtsZ protofilaments. Its function overlaps with FtsA. This chain is Cell division protein SepF, found in Streptococcus thermophilus (strain ATCC BAA-250 / LMG 18311).